A 490-amino-acid chain; its full sequence is Secretory immunoglobulin A-binding protein EsiB (490 aa).

An N-terminal signal peptide occupies residues 1–23 (MKKSLLAVMLTGLFALVSLPALG). Sel1-like repeat units lie at residues 39 to 74 (AKAQLELGYRYFQGNETTKDLTQAMDWFRRAAEQGY), 77 to 109 (AEYVLGLRYMNGEGVPQDYAQAVIWYKKAALKG), 111 to 145 (PQAQQNLGVMYHEGNGVKVDKAESVKWFRLAAEQG), 153 to 182 (MGDAYFEGDGVTRDYVMAREWYSKAAEQGN), 185 to 218 (SCNQLGYMYSRGLGVERNDAISAQWYRKSATSGD), 222 to 254 (QLHLADMYYFGIGVTQDYTQSRVLFSQSAEQGN), 256 to 290 (IAQFRLGYILEQGLAGAKEPLKALEWYRKSAEQGN), 291 to 327 (SDGQYYLAHLYDKGAEGVAKNREQAISWYTKSAEQGD), 328 to 361 (ATAQANLGAIYFRLGSEEEHKKAVEWFRKAAAKG), 364 to 397 (AAQFNLGNALLQGKGVKKDEQQAAIWMRKAAEQG), and 399 to 430 (SAAQVQLGEIYYYGLGVERDYVQAWAWFDTAS). Residues H122, E159, and D161 each coordinate Mg(2+).

Interacts with human secreted IgA (SIgA) at least via resides 244-260. It depends on Mg(2+) as a cofactor.

It localises to the cell surface. Upon host (human neutrophil) infection interferes with productive FCAR signaling, inhibiting secreted IgA (SIgA) effector functions and probably avoiding neutrophil activation. Inhibits the SIgA-mediated oxidative burst by neutrophils, decreases generation of ROS (reactive oxygen species) by neutrophils and reduces chemotaxis by neutrophils, all of which are SIgA effector functions used to stimulate the immune response. Does not block SIgA-binding to its receptor (FCAR) on neutrophils, but it decreases SIgA-stimulated phosphorylation of cytoplasmic proteins, including phospholipase C-gamma and MAP kinases, all actions that may be advantageous to the pathogen. The protein is Secretory immunoglobulin A-binding protein EsiB of Escherichia coli O6:H1 (strain CFT073 / ATCC 700928 / UPEC).